The following is a 1182-amino-acid chain: WD repeat-containing protein on Y chromosome (1182 aa).

WD repeat units follow at residues 155-199 (EEIT…LRSA), 323-362 (RIPL…EPSA), 366-405 (GHNG…LLQT), 456-495 (THAA…RKII), 508-547 (TIDI…VVRN), 595-635 (FHTD…RRYN), 740-779 (KTGD…IPKA), and 823-862 (GHLK…LGTL). Positions 1031 to 1182 (TKAGANLDQP…PKAKTDRETH (152 aa)) are disordered. 2 stretches are compositionally biased toward low complexity: residues 1079 to 1092 (GVSS…VSQG) and 1103 to 1121 (TTSL…PKGS).

The protein is WD repeat-containing protein on Y chromosome of Drosophila virilis (Fruit fly).